A 623-amino-acid polypeptide reads, in one-letter code: Aspartate--tRNA(Asp/Asn) ligase (623 aa).

Glutamate 175 lines the L-aspartate pocket. The aspartate stretch occupies residues 199-202 (QQYK). Positions 221 and 483 each coordinate L-aspartate. Residue 221–223 (RDE) participates in ATP binding. ATP is bound at residue glutamate 517. Arginine 524 is a binding site for L-aspartate. 569 to 572 (GVDR) is an ATP binding site.

It belongs to the class-II aminoacyl-tRNA synthetase family. Type 1 subfamily. Homodimer.

The protein localises to the cytoplasm. The catalysed reaction is tRNA(Asx) + L-aspartate + ATP = L-aspartyl-tRNA(Asx) + AMP + diphosphate. Aspartyl-tRNA synthetase with relaxed tRNA specificity since it is able to aspartylate not only its cognate tRNA(Asp) but also tRNA(Asn). Reaction proceeds in two steps: L-aspartate is first activated by ATP to form Asp-AMP and then transferred to the acceptor end of tRNA(Asp/Asn). This Xanthobacter autotrophicus (strain ATCC BAA-1158 / Py2) protein is Aspartate--tRNA(Asp/Asn) ligase.